Reading from the N-terminus, the 545-residue chain is Chaperonin GroEL 2 (545 aa).

Residues 30 to 33 (TLGP), Lys51, 87 to 91 (DGTTT), Gly415, and Asp494 each bind ATP. The interval 526-545 (EKGAGMPGMPPGGGYPGMGM) is disordered. Over residues 536–545 (PGGGYPGMGM) the composition is skewed to gly residues.

Belongs to the chaperonin (HSP60) family. Forms a cylinder of 14 subunits composed of two heptameric rings stacked back-to-back. Interacts with the co-chaperonin GroES.

It is found in the cytoplasm. It catalyses the reaction ATP + H2O + a folded polypeptide = ADP + phosphate + an unfolded polypeptide.. In terms of biological role, together with its co-chaperonin GroES, plays an essential role in assisting protein folding. The GroEL-GroES system forms a nano-cage that allows encapsulation of the non-native substrate proteins and provides a physical environment optimized to promote and accelerate protein folding. This Syntrophus aciditrophicus (strain SB) protein is Chaperonin GroEL 2.